The sequence spans 307 residues: tRNA dimethylallyltransferase (307 aa).

9–16 (GATGTGKS) is an ATP binding site. Substrate is bound at residue 11–16 (TGTGKS).

Belongs to the IPP transferase family. As to quaternary structure, monomer. It depends on Mg(2+) as a cofactor.

It carries out the reaction adenosine(37) in tRNA + dimethylallyl diphosphate = N(6)-dimethylallyladenosine(37) in tRNA + diphosphate. Its function is as follows. Catalyzes the transfer of a dimethylallyl group onto the adenine at position 37 in tRNAs that read codons beginning with uridine, leading to the formation of N6-(dimethylallyl)adenosine (i(6)A). The polypeptide is tRNA dimethylallyltransferase (Clavibacter sepedonicus (Clavibacter michiganensis subsp. sepedonicus)).